The sequence spans 271 residues: 4-hydroxy-tetrahydrodipicolinate reductase (271 aa).

NAD(+) contacts are provided by residues G11–M16 and E37. NADP(+) is bound at residue R38. NAD(+) is bound by residues G101–T103 and A125–M128. The active-site Proton donor/acceptor is the H158. H159 contributes to the (S)-2,3,4,5-tetrahydrodipicolinate binding site. K162 (proton donor) is an active-site residue. G168–T169 provides a ligand contact to (S)-2,3,4,5-tetrahydrodipicolinate.

This sequence belongs to the DapB family.

The protein resides in the cytoplasm. The enzyme catalyses (S)-2,3,4,5-tetrahydrodipicolinate + NAD(+) + H2O = (2S,4S)-4-hydroxy-2,3,4,5-tetrahydrodipicolinate + NADH + H(+). It carries out the reaction (S)-2,3,4,5-tetrahydrodipicolinate + NADP(+) + H2O = (2S,4S)-4-hydroxy-2,3,4,5-tetrahydrodipicolinate + NADPH + H(+). It participates in amino-acid biosynthesis; L-lysine biosynthesis via DAP pathway; (S)-tetrahydrodipicolinate from L-aspartate: step 4/4. In terms of biological role, catalyzes the conversion of 4-hydroxy-tetrahydrodipicolinate (HTPA) to tetrahydrodipicolinate. This is 4-hydroxy-tetrahydrodipicolinate reductase from Shewanella halifaxensis (strain HAW-EB4).